Consider the following 964-residue polypeptide: Insulin receptor substrate 1 (964 aa).

Residues 8 to 109 (GMALSGNLKK…WLDKLLVLQR (102 aa)) enclose the PH domain. Residues 122–236 (YDQVWQVVIQ…SAMSAKTESN (115 aa)) form the IRS-type PTB domain. Residues 249 to 268 (LSHEPMRKRSSSANEASKPI) are disordered. Phosphoserine is present on residues serine 286, serine 287, and serine 342. At tyrosine 410 the chain carries Phosphotyrosine; by INSR. The YXXM motif 1 motif lies at 410–413 (YIPM). Residues 527 to 560 (ASNRSQSSIGKEGSSYGSSANRQKKSTSAPLLSL) are disordered. Over residues 528 to 560 (SNRSQSSIGKEGSSYGSSANRQKKSTSAPLLSL) the composition is skewed to polar residues. Serine 554 is modified (phosphoserine). The short motif at 640 to 643 (YLEM) is the YXXM motif 2 element. Over residues 698-712 (EKWREQPSRSEEKKS) the composition is skewed to basic and acidic residues. Residues 698–735 (EKWREQPSRSEEKKSNSPLNDNPFSLKPTNVESKSKSH) form a disordered region. Over residues 713 to 729 (NSPLNDNPFSLKPTNVE) the composition is skewed to polar residues. Position 907 is a phosphotyrosine; by INSR (tyrosine 907). Positions 921-964 (AKYLKRGSRESPPVSACPEDGNTYARIDFDQSDSSSSSSNIFNT) are disordered. Serine 928 and serine 931 each carry phosphoserine. Tyrosine 944 is subject to Phosphotyrosine; by INSR. The span at 952–964 (SDSSSSSSNIFNT) shows a compositional bias: low complexity.

As to quaternary structure, bindings to phosphatidylinositol 3-kinase and SHP2.

In terms of biological role, activates phosphatidylinositol 3-kinase when bound to the regulatory p85 subunit. May mediate the control of various cellular processes by insulin-like peptides. When phosphorylated by the insulin receptor binds specifically to various cellular proteins containing SH2 domains. Involved in control of cell proliferation, cell size, and body and organ growth throughout development. Also has a role in a signaling pathway controlling the physiological response required to endure periods of low nutrient conditions. Insulin/insulin-like growth factor (IGF) signaling pathway has a role in regulating aging and is necessary in the ovary for vitellogenic maturation. The polypeptide is Insulin receptor substrate 1 (Drosophila sechellia (Fruit fly)).